A 496-amino-acid chain; its full sequence is UDP-glycosyltransferase 73C3 (496 aa).

Residues Ser-297, 357–359 (APQ), 374–382 (HCGWNSTLE), and 396–399 (FGDQ) each bind UDP-alpha-D-glucose.

It belongs to the UDP-glycosyltransferase family.

In Arabidopsis thaliana (Mouse-ear cress), this protein is UDP-glycosyltransferase 73C3 (UGT73C3).